The following is a 391-amino-acid chain: Lysophosphatidylinositol acyltransferase 10 (391 aa).

5 consecutive transmembrane segments (helical) span residues 10–30 (LLGWFFGLCILFSALFGNYII), 52–72 (AISYWMTIPMGLLEFLMGVRI), 97–119 (WMYMWCALYQINPWLITSNKISL), 323–343 (LTSLMFWTLVISFCSYHIFFV), and 347–367 (QLGFLYFFVISFYLSWRYGGI).

The protein belongs to the 1-acyl-sn-glycerol-3-phosphate acyltransferase family. As to expression, expressed in seam cells, vulval epithelial cells and the major epithelial syncytium hyp7, and in several head neurons including AIY interneurons.

The protein resides in the endoplasmic reticulum membrane. The enzyme catalyses a 2-acyl-sn-glycero-3-phospho-D-myo-inositol + an acyl-CoA = a 1,2-diacyl-sn-glycero-3-phospho-(1D-myo-inositol) + CoA. It carries out the reaction a 2-acyl-sn-glycero-3-phospho-D-myo-inositol + octadecanoyl-CoA = 1-octadecanoyl-2-acyl-sn-glycero-3-phospho-1D-myo-inositol + CoA. It functions in the pathway phospholipid metabolism; phosphatidylinositol metabolism. Functionally, acyltransferase required for the fatty acid remodeling of phosphatidylinositol (1,2-diacyl-sn-glycero-3-phosphoinositol or PI). Mediates the conversion of lysophosphatidylinositol (2-acylglycerophosphatidylinositol or LPI) into PI (LPIAT activity). Has preference for saturated and mono-unsaturated fatty acids as acyl donors and sn-2-acyl lysoPI (2-acyl-sn-glycero-3-phospho-D-myo-inositol) as acyl acceptor. Contributes to the asymmetric cell division of epithelial cells. Asymmetric cell division is the fundamental mechanism by which multicellular organisms generate cell diversity. This Caenorhabditis elegans protein is Lysophosphatidylinositol acyltransferase 10.